Here is a 483-residue protein sequence, read N- to C-terminus: L-2-hydroxyglutarate dehydrogenase, mitochondrial (483 aa).

The transit peptide at 1 to 67 (MKHKPETAAF…VDASKTIVRG (67 aa)) directs the protein to the mitochondrion.

The protein belongs to the L2HGDH family. The cofactor is FAD.

It localises to the mitochondrion. The enzyme catalyses (S)-2-hydroxyglutarate + A = 2-oxoglutarate + AH2. In terms of biological role, catalyzes the oxidation of (S)-2-hydroxyglutarate to 2-oxoglutarate. Is specific for the (S) enantiomer and possesses very poor activity toward (R)-2-hydroxyglutarate. Has no activity toward related 2-hydroxy acids, such as glycolate, L-lactate or D-lactate. The sequence is that of L-2-hydroxyglutarate dehydrogenase, mitochondrial from Arabidopsis thaliana (Mouse-ear cress).